Consider the following 391-residue polypeptide: Succinyl-diaminopimelate desuccinylase (391 aa).

His74 contacts Zn(2+). Residue Asp76 is part of the active site. Zn(2+) is bound at residue Asp107. Catalysis depends on Glu141, which acts as the Proton acceptor. Residues Glu142, Glu170, and His360 each coordinate Zn(2+).

It belongs to the peptidase M20A family. DapE subfamily. As to quaternary structure, homodimer. The cofactor is Zn(2+). Co(2+) is required as a cofactor.

The enzyme catalyses N-succinyl-(2S,6S)-2,6-diaminopimelate + H2O = (2S,6S)-2,6-diaminopimelate + succinate. It functions in the pathway amino-acid biosynthesis; L-lysine biosynthesis via DAP pathway; LL-2,6-diaminopimelate from (S)-tetrahydrodipicolinate (succinylase route): step 3/3. Catalyzes the hydrolysis of N-succinyl-L,L-diaminopimelic acid (SDAP), forming succinate and LL-2,6-diaminopimelate (DAP), an intermediate involved in the bacterial biosynthesis of lysine and meso-diaminopimelic acid, an essential component of bacterial cell walls. This is Succinyl-diaminopimelate desuccinylase from Variovorax paradoxus (strain S110).